Here is a 224-residue protein sequence, read N- to C-terminus: Uracil-DNA glycosylase 2 (224 aa).

Asp-64 (proton acceptor) is an active-site residue.

It belongs to the uracil-DNA glycosylase (UDG) superfamily. UNG family.

It localises to the cytoplasm. It carries out the reaction Hydrolyzes single-stranded DNA or mismatched double-stranded DNA and polynucleotides, releasing free uracil.. Functionally, excises uracil residues from the DNA which can arise as a result of misincorporation of dUMP residues by DNA polymerase or due to deamination of cytosine. The polypeptide is Uracil-DNA glycosylase 2 (Listeria monocytogenes serovar 1/2a (strain ATCC BAA-679 / EGD-e)).